Here is a 360-residue protein sequence, read N- to C-terminus: DNA polymerase IV (360 aa).

The UmuC domain occupies 9–191 (IMHLDIDAFY…LNINKIPYIG (183 aa)). Mg(2+) contacts are provided by Asp-13 and Asp-108. Residue Glu-109 is part of the active site.

The protein belongs to the DNA polymerase type-Y family. As to quaternary structure, monomer. Mg(2+) is required as a cofactor.

Its subcellular location is the cytoplasm. The enzyme catalyses DNA(n) + a 2'-deoxyribonucleoside 5'-triphosphate = DNA(n+1) + diphosphate. Its function is as follows. Poorly processive, error-prone DNA polymerase involved in untargeted mutagenesis. Copies undamaged DNA at stalled replication forks, which arise in vivo from mismatched or misaligned primer ends. These misaligned primers can be extended by PolIV. Exhibits no 3'-5' exonuclease (proofreading) activity. May be involved in translesional synthesis, in conjunction with the beta clamp from PolIII. In Ureaplasma parvum serovar 3 (strain ATCC 27815 / 27 / NCTC 11736), this protein is DNA polymerase IV.